The primary structure comprises 330 residues: MNDTLLTLILIVIKLGLVLGTVLTLAAYMVLAERKILGRMQMRYGPNRVGWGGMLQPLADLIKLLCKEDLIPQRADRWVFMLAPAISTITALLAFAVIPFGAPLQLFDRSLPMVICDLNIGLLYLFALSSLAVYGVALGGWASHSKYALLGGLRAMAQMISYELAMGLAIVPVVMTARSFSLTAIVEAQQSLPNMLRHPLAFFIFLVAIMAESKRTPFDMPEAENELVAGFHTEYSGMRFGMFFVGEYLNLIVLGSMLTVLFLGGWYGPLLPGICWFLIKVLGVAFFFIWVRGTMPRLRYDQLMAFGWKILVPLGLLNILVTAAWLIWRG.

A run of 8 helical transmembrane segments spans residues 5 to 25, 78 to 98, 120 to 140, 155 to 175, 191 to 211, 243 to 263, 271 to 291, and 308 to 328; these read LLTL…VLTL, WVFM…FAVI, IGLL…ALGG, AMAQ…PVVM, SLPN…AIMA, FFVG…VLFL, LPGI…FIWV, and WKIL…WLIW.

Belongs to the complex I subunit 1 family. NDH-1 is composed of 14 different subunits. Subunits NuoA, H, J, K, L, M, N constitute the membrane sector of the complex.

The protein resides in the cell inner membrane. It carries out the reaction a quinone + NADH + 5 H(+)(in) = a quinol + NAD(+) + 4 H(+)(out). In terms of biological role, NDH-1 shuttles electrons from NADH, via FMN and iron-sulfur (Fe-S) centers, to quinones in the respiratory chain. The immediate electron acceptor for the enzyme in this species is believed to be ubiquinone. Couples the redox reaction to proton translocation (for every two electrons transferred, four hydrogen ions are translocated across the cytoplasmic membrane), and thus conserves the redox energy in a proton gradient. This subunit may bind ubiquinone. This chain is NADH-quinone oxidoreductase subunit H, found in Syntrophotalea carbinolica (strain DSM 2380 / NBRC 103641 / GraBd1) (Pelobacter carbinolicus).